We begin with the raw amino-acid sequence, 375 residues long: Alcohol dehydrogenase class-3 chain L (375 aa).

Alanine 1 is modified (N-acetylalanine). Zn(2+) contacts are provided by cysteine 46, histidine 68, cysteine 98, cysteine 101, cysteine 104, cysteine 112, and cysteine 175.

Belongs to the zinc-containing alcohol dehydrogenase family. Class-III subfamily. In terms of assembly, homodimer or heterodimer with H chain. Requires Zn(2+) as cofactor.

The protein resides in the cytoplasm. The catalysed reaction is a primary alcohol + NAD(+) = an aldehyde + NADH + H(+). It carries out the reaction a secondary alcohol + NAD(+) = a ketone + NADH + H(+). The enzyme catalyses S-(hydroxymethyl)glutathione + NADP(+) = S-formylglutathione + NADPH + H(+). It catalyses the reaction S-(hydroxymethyl)glutathione + NAD(+) = S-formylglutathione + NADH + H(+). In terms of biological role, class-III ADH is remarkably ineffective in oxidizing ethanol, but it readily catalyzes the oxidation of long-chain primary alcohols and the oxidation of S-(hydroxymethyl) glutathione. The polypeptide is Alcohol dehydrogenase class-3 chain L (Gadus morhua (Atlantic cod)).